We begin with the raw amino-acid sequence, 131 residues long: Small ribosomal subunit protein uS12 (131 aa).

A 3-methylthioaspartic acid modification is found at aspartate 89.

The protein belongs to the universal ribosomal protein uS12 family. As to quaternary structure, part of the 30S ribosomal subunit. Contacts proteins S8 and S17. May interact with IF1 in the 30S initiation complex.

Its function is as follows. With S4 and S5 plays an important role in translational accuracy. In terms of biological role, interacts with and stabilizes bases of the 16S rRNA that are involved in tRNA selection in the A site and with the mRNA backbone. Located at the interface of the 30S and 50S subunits, it traverses the body of the 30S subunit contacting proteins on the other side and probably holding the rRNA structure together. The combined cluster of proteins S8, S12 and S17 appears to hold together the shoulder and platform of the 30S subunit. In Karelsulcia muelleri (strain GWSS) (Sulcia muelleri), this protein is Small ribosomal subunit protein uS12.